The following is a 296-amino-acid chain: MTLSPLEKTGILIEALPYIRQFYGKTVVIKYGGHAMVNCELKKAVMQDAVLMHLVGMRPVIVHGGGPEITSMLGRLGKQSQFIQGQRVTDAETMEIVEMVLVGKINKEIVANIHRYGGKAIGLCGKDGHLIEARKQVAHIQKDGEEMDLDLGYVGQVERVNPGIIETVIAEGYIPVVAPIGVGPEGESYNINADLVAGELAVALQADKLVLLTDVEGILADRDDPASLISSLEVGRVPELIQQGVIAGGMIPKVNCCIRALEGGVKKTHIIDGRIPHSILLEVFTDTGVGTMVVPG.

Substrate-binding positions include 65–66 (GG), arginine 87, and asparagine 190.

The protein belongs to the acetylglutamate kinase family. ArgB subfamily.

Its subcellular location is the cytoplasm. It carries out the reaction N-acetyl-L-glutamate + ATP = N-acetyl-L-glutamyl 5-phosphate + ADP. It participates in amino-acid biosynthesis; L-arginine biosynthesis; N(2)-acetyl-L-ornithine from L-glutamate: step 2/4. Functionally, catalyzes the ATP-dependent phosphorylation of N-acetyl-L-glutamate. The protein is Acetylglutamate kinase of Moorella thermoacetica (strain ATCC 39073 / JCM 9320).